A 356-amino-acid polypeptide reads, in one-letter code: TPR repeat-containing protein P27G11.02 (356 aa).

The transit peptide at 1–20 (MRMQWIWKSRRSLQNVFIRR) directs the protein to the mitochondrion. 2 TPR repeats span residues 194-227 (SRLF…TMAN) and 290-323 (AAAF…RKDD).

Its subcellular location is the mitochondrion. This Schizosaccharomyces pombe (strain 972 / ATCC 24843) (Fission yeast) protein is TPR repeat-containing protein P27G11.02.